Reading from the N-terminus, the 363-residue chain is MPAYNIVVFAGDHWGPEVTAEAIKVLRVIEKSRDDITLNLQDHLLGGASIDATANPLTDEALAAAKNADAVLLGAIGGPKWGTGAVRPEQGLLNVRKEMGTFGNLRPCNFAAPSLVEHSPLKASVCEGVDFNIIRELTGGIYFGDRKKMTAAATMDTEPYSRAEIERITPRAHLALQHNPPLPVWSLDKANVLATSRLWRKTVTEIMAKEFPQLKIEHQLIDSAAMIMVKNPRQLNGIIVTSNLFGDIISDEASVIPGSLGLLPSASLSGIPDGKGRVNGIYEPIHGSAPDIAGKGIVNPVAAILSVAMMMQYSFGRFDEARAIEAAVRNVLESGVRTGDIGGKATTSEVGDAVAAELEKLLK.

An NAD(+)-binding site is contributed by 78 to 89 (GPKWGTGAVRPE). Substrate-binding residues include Arg-96, Arg-106, Arg-135, and Asp-222. 3 residues coordinate Mg(2+): Asp-222, Asp-247, and Asp-251. 287-299 (GSAPDIAGKGIVN) contributes to the NAD(+) binding site.

Belongs to the isocitrate and isopropylmalate dehydrogenases family. In terms of assembly, homodimer. Mg(2+) is required as a cofactor. The cofactor is Mn(2+).

It is found in the cytoplasm. The catalysed reaction is (2R,3S)-3-isopropylmalate + NAD(+) = 4-methyl-2-oxopentanoate + CO2 + NADH. It participates in amino-acid biosynthesis; L-leucine biosynthesis; L-leucine from 3-methyl-2-oxobutanoate: step 3/4. Its function is as follows. Catalyzes the oxidation of 3-carboxy-2-hydroxy-4-methylpentanoate (3-isopropylmalate) to 3-carboxy-4-methyl-2-oxopentanoate. The product decarboxylates to 4-methyl-2 oxopentanoate. This chain is 3-isopropylmalate dehydrogenase A (leu2A), found in Aspergillus niger.